Consider the following 274-residue polypeptide: Probable lipoprotein peptidase YaeF (274 aa).

Positions methionine 1–alanine 20 are cleaved as a signal peptide. The N-palmitoyl cysteine moiety is linked to residue cysteine 21. A lipid anchor (S-diacylglycerol cysteine) is attached at cysteine 21. Cysteine 207 functions as the Nucleophile in the catalytic mechanism. Histidine 257 (proton acceptor) is an active-site residue.

Its subcellular location is the cell inner membrane. This is Probable lipoprotein peptidase YaeF (yaeF) from Escherichia coli (strain K12).